The primary structure comprises 366 residues: Protein FAM110B (366 aa).

3 disordered regions span residues 127–152 (SSEG…DTTD), 163–182 (KVYP…HVSR), and 216–252 (CSSS…RPSL). S234 and S297 each carry phosphoserine. The segment at 313-333 (DCEQSQDSNSDLRNDDSANDR) is disordered. Residues 322 to 331 (SDLRNDDSAN) show a composition bias toward basic and acidic residues.

Belongs to the FAM110 family.

Its subcellular location is the cytoplasm. It is found in the cytoskeleton. It localises to the microtubule organizing center. The protein resides in the centrosome. The polypeptide is Protein FAM110B (Fam110b) (Mus musculus (Mouse)).